We begin with the raw amino-acid sequence, 32 residues long: Conotoxin pr6d (32 aa).

Proline 5 carries the post-translational modification 4-hydroxyproline. 3 disulfide bridges follow: cysteine 7-cysteine 20, cysteine 14-cysteine 25, and cysteine 19-cysteine 30.

As to expression, expressed by the venom duct.

It is found in the secreted. The sequence is that of Conotoxin pr6d from Conus parius (Cone snail).